The sequence spans 291 residues: NADH-cytochrome b5 reductase 2 (291 aa).

A helical membrane pass occupies residues 7–23 (PIAATSVVAAAASSYYF). The region spanning 41-145 (DQWVDLKLKS…KGPIIKYQWQ (105 aa)) is the FAD-binding FR-type domain. Residue 148 to 183 (LHKEITLIGAGTGITPLYQLISAINKNPEDKTKVNL) coordinates FAD.

It belongs to the flavoprotein pyridine nucleotide cytochrome reductase family. It depends on FAD as a cofactor.

It is found in the mitochondrion outer membrane. The enzyme catalyses 2 Fe(III)-[cytochrome b5] + NADH = 2 Fe(II)-[cytochrome b5] + NAD(+) + H(+). May mediate the reduction of outer membrane cytochrome b5. The polypeptide is NADH-cytochrome b5 reductase 2 (MCR1) (Yarrowia lipolytica (strain CLIB 122 / E 150) (Yeast)).